The sequence spans 95 residues: Aspartyl/glutamyl-tRNA(Asn/Gln) amidotransferase subunit C (95 aa).

This sequence belongs to the GatC family. In terms of assembly, heterotrimer of A, B and C subunits.

The catalysed reaction is L-glutamyl-tRNA(Gln) + L-glutamine + ATP + H2O = L-glutaminyl-tRNA(Gln) + L-glutamate + ADP + phosphate + H(+). It catalyses the reaction L-aspartyl-tRNA(Asn) + L-glutamine + ATP + H2O = L-asparaginyl-tRNA(Asn) + L-glutamate + ADP + phosphate + 2 H(+). Its function is as follows. Allows the formation of correctly charged Asn-tRNA(Asn) or Gln-tRNA(Gln) through the transamidation of misacylated Asp-tRNA(Asn) or Glu-tRNA(Gln) in organisms which lack either or both of asparaginyl-tRNA or glutaminyl-tRNA synthetases. The reaction takes place in the presence of glutamine and ATP through an activated phospho-Asp-tRNA(Asn) or phospho-Glu-tRNA(Gln). The protein is Aspartyl/glutamyl-tRNA(Asn/Gln) amidotransferase subunit C of Nitrosococcus oceani (strain ATCC 19707 / BCRC 17464 / JCM 30415 / NCIMB 11848 / C-107).